Reading from the N-terminus, the 628-residue chain is Kelch-like protein diablo (628 aa).

The interval 1–56 (MGDLPGSTGGGSGPAAAGNASGNSSSAGNTGLGVAGTTGVDRPPSPARLSHTSEKH) is disordered. Low complexity predominate over residues 14–29 (PAAAGNASGNSSSAGN). The region spanning 74 to 141 (CDVVLNVGGR…CYTAHIIVEE (68 aa)) is the BTB domain. A BACK domain is found at 176 to 278 (CLGIRAFADT…SPKFLVGTVG (103 aa)). 6 Kelch repeats span residues 325 to 371 (VLFA…VLND), 373 to 419 (LYAV…VLDG), 420 to 466 (FLYA…VLGG), 468 to 513 (LYAI…VFNN), 515 to 560 (IYAV…VVNG), and 561 to 607 (QLYA…VMRA).

It participates in protein modification; protein ubiquitination. Probable substrate-specific adapter of an E3 ubiquitin-protein ligase complex which mediates the ubiquitination and subsequent proteasomal degradation of target proteins. May have a role in synapse differentiation and growth. The polypeptide is Kelch-like protein diablo (Drosophila persimilis (Fruit fly)).